Here is a 24-residue protein sequence, read N- to C-terminus: Attacin (24 aa).

It belongs to the attacin/sarcotoxin-2 family.

The protein localises to the secreted. In terms of biological role, hemolymph antibacterial protein. This chain is Attacin, found in Heliothis virescens (Tobacco budworm moth).